A 705-amino-acid polypeptide reads, in one-letter code: Translation initiation factor IF-2 (705 aa).

The interval aspartate 40–serine 124 is disordered. Over residues aspartate 41 to asparagine 58 the composition is skewed to basic and acidic residues. Residues lysine 59–glycine 77 show a composition bias toward low complexity. Residues lysine 94–lysine 108 show a composition bias toward basic residues. A tr-type G domain is found at glutamate 207–lysine 376. The interval glycine 216–threonine 223 is G1. Residue glycine 216–threonine 223 coordinates GTP. The G2 stretch occupies residues glycine 241–histidine 245. The segment at aspartate 262 to glycine 265 is G3. Residues aspartate 262–histidine 266 and asparagine 316–aspartate 319 contribute to the GTP site. Residues asparagine 316–aspartate 319 form a G4 region. The segment at serine 352–leucine 354 is G5.

This sequence belongs to the TRAFAC class translation factor GTPase superfamily. Classic translation factor GTPase family. IF-2 subfamily.

Its subcellular location is the cytoplasm. In terms of biological role, one of the essential components for the initiation of protein synthesis. Protects formylmethionyl-tRNA from spontaneous hydrolysis and promotes its binding to the 30S ribosomal subunits. Also involved in the hydrolysis of GTP during the formation of the 70S ribosomal complex. The chain is Translation initiation factor IF-2 from Staphylococcus aureus (strain MSSA476).